The primary structure comprises 253 residues: Triosephosphate isomerase (253 aa).

9–11 (NWK) contacts substrate. The active-site Electrophile is the His-97. The Proton acceptor role is filled by Glu-169. Substrate contacts are provided by residues Gly-175, Ser-215, and 236–237 (GG).

The protein belongs to the triosephosphate isomerase family. Homodimer.

Its subcellular location is the cytoplasm. The catalysed reaction is D-glyceraldehyde 3-phosphate = dihydroxyacetone phosphate. Its pathway is carbohydrate biosynthesis; gluconeogenesis. It functions in the pathway carbohydrate degradation; glycolysis; D-glyceraldehyde 3-phosphate from glycerone phosphate: step 1/1. Its function is as follows. Involved in the gluconeogenesis. Catalyzes stereospecifically the conversion of dihydroxyacetone phosphate (DHAP) to D-glyceraldehyde-3-phosphate (G3P). The sequence is that of Triosephosphate isomerase from Staphylococcus haemolyticus (strain JCSC1435).